We begin with the raw amino-acid sequence, 128 residues long: Aspartate 1-decarboxylase (128 aa).

Catalysis depends on serine 25, which acts as the Schiff-base intermediate with substrate; via pyruvic acid. Serine 25 carries the pyruvic acid (Ser) modification. Threonine 57 contributes to the substrate binding site. Tyrosine 58 (proton donor) is an active-site residue. 73–75 (GSA) serves as a coordination point for substrate.

The protein belongs to the PanD family. In terms of assembly, heterooctamer of four alpha and four beta subunits. The cofactor is pyruvate. Post-translationally, is synthesized initially as an inactive proenzyme, which is activated by self-cleavage at a specific serine bond to produce a beta-subunit with a hydroxyl group at its C-terminus and an alpha-subunit with a pyruvoyl group at its N-terminus.

The protein resides in the cytoplasm. It catalyses the reaction L-aspartate + H(+) = beta-alanine + CO2. Its pathway is cofactor biosynthesis; (R)-pantothenate biosynthesis; beta-alanine from L-aspartate: step 1/1. Functionally, catalyzes the pyruvoyl-dependent decarboxylation of aspartate to produce beta-alanine. The sequence is that of Aspartate 1-decarboxylase from Burkholderia pseudomallei (strain 668).